A 195-amino-acid polypeptide reads, in one-letter code: Archaetidylinositol phosphate synthase (195 aa).

Transmembrane regions (helical) follow at residues 27–47 and 54–74; these read IALP…AASA and LITG…DGAV. Residues Asp-68, Asp-71, Asp-89, and Asp-93 each coordinate Mg(2+). The active-site Proton acceptor is the Asp-93. Helical transmembrane passes span 99–119 and 158–178; these read IIII…LLAL and LAGY…LAAL.

This sequence belongs to the CDP-alcohol phosphatidyltransferase class-I family. Mn(2+) is required as a cofactor. Mg(2+) serves as cofactor.

It is found in the cell membrane. It catalyses the reaction CDP-2,3-bis-O-(phytanyl)-sn-glycerol + 1D-myo-inositol 3-phosphate = saturated 1-archaetidyl-1D-myo-inositol 3-phosphate + CMP + H(+). The protein operates within lipid metabolism; phospholipid metabolism. Catalyzes the formation of archaetidylinositol phosphate (AIP) from CDP-archaeol (CDP-ArOH or CDP-2,3-bis-(O-phytanyl)-sn-glycerol) and 1L-myo-inositol 1-phosphate (IP or 1D-myo-inositol 3-phosphate). AIP is a precursor of archaetidyl-myo-inositol (AI), an ether-type inositol phospholipid ubiquitously distributed in archaea membranes and essential for glycolipid biosynthesis in archaea. This chain is Archaetidylinositol phosphate synthase, found in Methanothermobacter thermautotrophicus (strain ATCC 29096 / DSM 1053 / JCM 10044 / NBRC 100330 / Delta H) (Methanobacterium thermoautotrophicum).